The sequence spans 256 residues: Thiazole synthase (256 aa).

The active-site Schiff-base intermediate with DXP is lysine 96. Residues glycine 157, 184–185 (AG), and 206–207 (NT) contribute to the 1-deoxy-D-xylulose 5-phosphate site.

The protein belongs to the ThiG family. As to quaternary structure, homotetramer. Forms heterodimers with either ThiH or ThiS.

It localises to the cytoplasm. The catalysed reaction is [ThiS sulfur-carrier protein]-C-terminal-Gly-aminoethanethioate + 2-iminoacetate + 1-deoxy-D-xylulose 5-phosphate = [ThiS sulfur-carrier protein]-C-terminal Gly-Gly + 2-[(2R,5Z)-2-carboxy-4-methylthiazol-5(2H)-ylidene]ethyl phosphate + 2 H2O + H(+). It functions in the pathway cofactor biosynthesis; thiamine diphosphate biosynthesis. Catalyzes the rearrangement of 1-deoxy-D-xylulose 5-phosphate (DXP) to produce the thiazole phosphate moiety of thiamine. Sulfur is provided by the thiocarboxylate moiety of the carrier protein ThiS. In vitro, sulfur can be provided by H(2)S. The protein is Thiazole synthase of Brucella canis (strain ATCC 23365 / NCTC 10854 / RM-666).